The following is a 221-amino-acid chain: 2-amino-5-formylamino-6-ribosylaminopyrimidin-4(3H)-one 5'-monophosphate deformylase (221 aa).

Positions 29, 31, 40, and 108 each coordinate Fe cation.

It belongs to the creatininase superfamily. FAPy deformylase family. In terms of assembly, homodimer. The cofactor is Fe(2+). Zn(2+) is required as a cofactor.

It catalyses the reaction 2-amino-5-formylamino-6-(5-phospho-D-ribosylamino)pyrimidin-4(3H)-one + H2O = 2,5-diamino-6-(1-D-ribosylamino)pyrimidin-4(3H)-one 5'-phosphate + formate + H(+). It functions in the pathway cofactor biosynthesis; coenzyme F420 biosynthesis. Its pathway is cofactor biosynthesis; riboflavin biosynthesis. Functionally, catalyzes the hydrolysis of the formamide of 2-amino-5-formylamino-6-ribosylamino-4(3H)-pyrimidinone 5'-monophosphate (FAPy) to form 2,5-diamino-6-ribosylamino-4(3H)-pyrimidinone 5'-phosphate (APy). In Methanococcus maripaludis (strain C7 / ATCC BAA-1331), this protein is 2-amino-5-formylamino-6-ribosylaminopyrimidin-4(3H)-one 5'-monophosphate deformylase.